The sequence spans 369 residues: Flagellar P-ring protein 2 (369 aa).

Positions 1-24 are cleaved as a signal peptide; that stretch reads MCAFAAILSLLSVLLMATSRSSDA.

This sequence belongs to the FlgI family. In terms of assembly, the basal body constitutes a major portion of the flagellar organelle and consists of four rings (L,P,S, and M) mounted on a central rod.

It is found in the periplasm. It localises to the bacterial flagellum basal body. Its function is as follows. Assembles around the rod to form the L-ring and probably protects the motor/basal body from shearing forces during rotation. This is Flagellar P-ring protein 2 from Burkholderia thailandensis (strain ATCC 700388 / DSM 13276 / CCUG 48851 / CIP 106301 / E264).